Consider the following 521-residue polypeptide: MALIILPFIGSLSVSESLVALITICVVYLILTYSHTKIPAGLQRLPGPKPLPIIGNVLEIGRKPYQTLTALSKRYGPVFQIQIGMRPVVVLSGSETVRQALIKQGEDFSGRPDLYTFQFISDGKSLAFSTDKVGVWRARRKLAYSALRSFSSLESTNQEYSCMLEEHICKEGEYLVKQLNTSMKANGSFDPFRNIVVSVANVICGMCFGRRYDHYDQELVSLVNLSEEFGQVVGTGNLADFIPVLRFLPSTAMKKFLSINDRFDKFVKKIVSEHYATYNKDNIRDITDSLIDHCEDRKLDENCNVQVSDEKIVGIVNDLFGAGFDTVSTGLSWSVMYLVAYPEIQERLYQEIKDSVGTERMPLLSDRPSLPFLDAFILEIFRHSSFLPFTIPHCTTKNTSLNGYFIPKDTCVFINQWQINHDPELWKDPFSFNPERFLSADGTELNRLEGEKVMLFGLGKRRCIGEVIARNEVFLFLAIIIQRLQFHMLPGEPLDMTPEYGLTMKHKRCQLRATMREKNEQ.

Residue Phe-229 coordinates substrate. A heme-binding site is contributed by Cys-463.

The protein belongs to the cytochrome P450 family. Heme is required as a cofactor.

Its subcellular location is the endoplasmic reticulum membrane. It localises to the microsome membrane. It carries out the reaction an organic molecule + reduced [NADPH--hemoprotein reductase] + O2 = an alcohol + oxidized [NADPH--hemoprotein reductase] + H2O + H(+). In terms of biological role, cytochromes P450 are a group of heme-thiolate monooxygenases. They oxidize a variety of structurally unrelated compounds, including steroids, fatty acids, and xenobiotics. In Opsanus tau (Oyster toadfish), this protein is Cytochrome P450 1A1 (cyp1a1).